The sequence spans 108 residues: UPF0060 membrane protein BLi00854/BL03049 (108 aa).

The next 4 membrane-spanning stretches (helical) occupy residues 3–23 (IAIGLFLLAGLAEIAGGYLVW), 31–51 (PLWYGLAGGLTLIIYGVIPAF), 60–80 (VYAAYGGVFIILAVLWGWLVD), and 86–106 (LYDWAGAVICLAGVSVMLWAP).

This sequence belongs to the UPF0060 family.

It is found in the cell membrane. The protein is UPF0060 membrane protein BLi00854/BL03049 of Bacillus licheniformis (strain ATCC 14580 / DSM 13 / JCM 2505 / CCUG 7422 / NBRC 12200 / NCIMB 9375 / NCTC 10341 / NRRL NRS-1264 / Gibson 46).